Reading from the N-terminus, the 149-residue chain is Arginine repressor (149 aa).

Belongs to the ArgR family.

The protein resides in the cytoplasm. Its pathway is amino-acid biosynthesis; L-arginine biosynthesis [regulation]. Regulates arginine biosynthesis genes. The protein is Arginine repressor of Bacillus mycoides (strain KBAB4) (Bacillus weihenstephanensis).